The following is a 319-amino-acid chain: Protein HEXIM1 (319 aa).

A compositionally biased stretch (basic and acidic residues) spans 1 to 22 (MELIKEETAPEDDSRGRQRDCR). 4 disordered regions span residues 1 to 111 (MELI…KKRR), 157 to 223 (LMEE…LQKD), 262 to 286 (NNWL…RVRE), and 299 to 319 (NELL…SQPS). Positions 24 to 35 (SVVSSKQVQRNQ) are enriched in polar residues. The span at 49 to 61 (PMCRDRSDPEPRT) shows a compositional bias: basic and acidic residues. A compositionally biased stretch (basic residues) spans 97 to 111 (GKKKHRRRPSKKKRR). The span at 185–202 (TASEDENFEAEEDDEEEG) shows a compositional bias: acidic residues. Positions 203–216 (GGGSDGMGRPGQAG) are enriched in gly residues. The stretch at 240 to 306 (SKQELVREYL…ENNELLLKTP (67 aa)) forms a coiled coil. Residues 306–319 (PASNEPGLNQSQPS) show a composition bias toward polar residues.

Belongs to the HEXIM family. In terms of assembly, homooligomer and heterooligomer. Core component of the 7SK RNP complex.

The protein resides in the nucleus. Its subcellular location is the cytoplasm. In terms of biological role, transcriptional regulator which functions as a general RNA polymerase II transcription inhibitor. Core component of the 7SK RNP complex: in cooperation with 7SK snRNA sequesters P-TEFb in a large inactive 7SK snRNP complex preventing RNA polymerase II phosphorylation and subsequent transcriptional elongation. Plays a role in the regulation of DNA virus-mediated innate immune response by assembling into the HDP-RNP complex, a complex that serves as a platform for IRF3 phosphorylation and subsequent innate immune response activation through the cGAS-STING pathway. The sequence is that of Protein HEXIM1 (hexim1) from Danio rerio (Zebrafish).